The sequence spans 218 residues: Large ribosomal subunit protein uL3 (218 aa).

The segment at 126-163 is disordered; the sequence is HGFSRGPMTHGSKNHRQPGSIGAGTTPGRIYPGKRMSG.

Belongs to the universal ribosomal protein uL3 family. As to quaternary structure, part of the 50S ribosomal subunit. Forms a cluster with proteins L14 and L19.

In terms of biological role, one of the primary rRNA binding proteins, it binds directly near the 3'-end of the 23S rRNA, where it nucleates assembly of the 50S subunit. The protein is Large ribosomal subunit protein uL3 of Synechococcus sp. (strain CC9311).